We begin with the raw amino-acid sequence, 1364 residues long: Collagen alpha-2(I) chain (1364 aa).

An N-terminal signal peptide occupies residues 1 to 22 (MLSFVDTRTLLLLAVTSCLATC). Residue glutamine 23 is modified to Pyrrolidone carboxylic acid. Residues 23–79 (QSLQEATARKGPSGDRGPRGERGPPGPPGRDGDDGIPGPPGPPGPPGPPGLGGNFAA) constitute a propeptide, N-terminal propeptide. Residues 26–1128 (QEATARKGPS…QPRSPTSLRP (1103 aa)) are disordered. Over residues 34 to 44 (PSGDRGPRGER) the composition is skewed to basic and acidic residues. Over residues 59–71 (PGPPGPPGPPGPP) the composition is skewed to pro residues. Pyrrolidone carboxylic acid is present on glutamine 80. Lysine 84 is modified (allysine). A compositionally biased stretch (low complexity) spans 93–130 (LMGPRGPPGASGAPGPQGFQGPPGEPGEPGQTGPAGAR). Residues proline 100, proline 106, proline 115, proline 118, proline 121, proline 133, proline 136, proline 145, proline 151, proline 166, proline 169, and proline 172 each carry the 4-hydroxyproline modification. A compositionally biased stretch (basic and acidic residues) spans 139 to 153 (AGEDGHPGKPGRPGE). Lysine 175 bears the 5-hydroxylysine; alternate mark. An O-linked (Gal...) hydroxylysine; alternate glycan is attached at lysine 175. Residues proline 190 and proline 193 each carry the 4-hydroxyproline modification. Lysine 196 is modified (5-hydroxylysine). Proline 199, proline 202, proline 208, proline 217, proline 226, proline 253, proline 256, and proline 259 each carry 4-hydroxyproline. Low complexity predominate over residues 223–252 (VGAPGPAGARGSDGSVGPVGPAGPIGSAGP). Residue lysine 262 is modified to 5-hydroxylysine. A 4-hydroxyproline mark is found at proline 271, proline 286, proline 295, and proline 304. Residues 277 to 291 (AGPRGEVGLPGLSGP) are compositionally biased toward low complexity. The segment covering 298-319 (PGANGLPGAKGAAGLPGVAGAP) has biased composition (low complexity). Lysine 307 carries the post-translational modification 5-hydroxylysine. 4-hydroxyproline is present on residues proline 313, proline 319, proline 322, proline 328, and proline 346. The segment covering 328 to 343 (PGPVGAAGATGARGLV) has biased composition (low complexity). A 5-hydroxylysine modification is found at lysine 352. 4-hydroxyproline occurs at positions 361, 367, 370, 391, 394, 400, 406, 439, and 442. Residues 396–406 (LRGNPGSRGLP) are compositionally biased toward low complexity. Composition is skewed to low complexity over residues 468 to 487 (LPGI…RGEP) and 511 to 535 (AGLA…PGLQ). Gly residues predominate over residues 536-545 (GVQGGKGEQG). Low complexity-rich tracts occupy residues 592-609 (PGES…SRGP), 621-643 (EPGV…PGER), 666-688 (SPGR…AGAN), and 715-735 (VGPA…QPGA). Positions 736 to 745 (KGERGTKGPK) are enriched in basic and acidic residues. Residues 748-763 (NGPVGPTGPVGAAGPS) show a composition bias toward low complexity. The span at 773-782 (GSRGDGGPPG) shows a compositional bias: gly residues. Composition is skewed to low complexity over residues 783–793 (ATGFPGAAGRT), 861–874 (PQGL…LGLP), 891–930 (EPGP…NPGN), 948–961 (YPGN…AGAP), and 978–999 (EPGP…PSGP). Over residues 1003–1014 (RGDKGEPGDKGP) the composition is skewed to basic and acidic residues. The span at 1087 to 1101 (AGPPGPPGPPGPPGP) shows a compositional bias: pro residues. Residues 1118 to 1364 (DQPRSPTSLR…RLNIGPVCFK (247 aa)) constitute a propeptide, C-terminal propeptide. The region spanning 1131–1364 (YEVDATLKSL…RLNIGPVCFK (234 aa)) is the Fibrillar collagen NC1 domain. 3 cysteine pairs are disulfide-bonded: cysteine 1161–cysteine 1193, cysteine 1201–cysteine 1362, and cysteine 1270–cysteine 1315. Ca(2+)-binding residues include aspartate 1179, asparagine 1181, glutamine 1182, cysteine 1184, and aspartate 1187. N-linked (GlcNAc...) asparagine glycosylation occurs at asparagine 1265.

Belongs to the fibrillar collagen family. As to quaternary structure, trimers of one alpha 2(I) and two alpha 1(I) chains. Interacts (via C-terminus) with TMEM131 (via PapD-L domain); the interaction is direct and is involved in assembly and TRAPPIII ER-to-Golgi transport complex-dependent secretion of collagen. Prolines at the third position of the tripeptide repeating unit (G-X-Y) are hydroxylated in some or all of the chains. In terms of tissue distribution, forms the fibrils of tendon, ligaments and bones. In bones the fibrils are mineralized with calcium hydroxyapatite.

The protein resides in the secreted. The protein localises to the extracellular space. It localises to the extracellular matrix. Type I collagen is a member of group I collagen (fibrillar forming collagen). This is Collagen alpha-2(I) chain (COL1A2) from Bos taurus (Bovine).